Consider the following 466-residue polypeptide: UDP-N-acetylmuramoylalanine--D-glutamate ligase (466 aa).

Residue 121–127 participates in ATP binding; it reads GTNGKST.

The protein belongs to the MurCDEF family.

Its subcellular location is the cytoplasm. It catalyses the reaction UDP-N-acetyl-alpha-D-muramoyl-L-alanine + D-glutamate + ATP = UDP-N-acetyl-alpha-D-muramoyl-L-alanyl-D-glutamate + ADP + phosphate + H(+). Its pathway is cell wall biogenesis; peptidoglycan biosynthesis. Functionally, cell wall formation. Catalyzes the addition of glutamate to the nucleotide precursor UDP-N-acetylmuramoyl-L-alanine (UMA). The protein is UDP-N-acetylmuramoylalanine--D-glutamate ligase of Rhodopseudomonas palustris (strain HaA2).